The sequence spans 318 residues: Methionyl-tRNA formyltransferase (318 aa).

A (6S)-5,6,7,8-tetrahydrofolate-binding site is contributed by 112–115 (SLLP).

This sequence belongs to the Fmt family.

It catalyses the reaction L-methionyl-tRNA(fMet) + (6R)-10-formyltetrahydrofolate = N-formyl-L-methionyl-tRNA(fMet) + (6S)-5,6,7,8-tetrahydrofolate + H(+). Its function is as follows. Attaches a formyl group to the free amino group of methionyl-tRNA(fMet). The formyl group appears to play a dual role in the initiator identity of N-formylmethionyl-tRNA by promoting its recognition by IF2 and preventing the misappropriation of this tRNA by the elongation apparatus. The chain is Methionyl-tRNA formyltransferase from Citrifermentans bemidjiense (strain ATCC BAA-1014 / DSM 16622 / JCM 12645 / Bem) (Geobacter bemidjiensis).